A 502-amino-acid chain; its full sequence is Hexokinase-4 (502 aa).

The helical transmembrane segment at 4 to 24 threads the bilayer; the sequence is VLVMLTAAAAVVACSVATVMV. The 457-residue stretch at 35 to 491 folds into the Hexokinase domain; that stretch reads RRVVGLLKDL…SSIGSALLLA (457 aa). The segment at 90–228 is hexokinase small subdomain; sequence NGSETGTYYA…GLDIRVAALV (139 aa). 2 residues coordinate ADP: glycine 104 and serine 105. 4 residues coordinate D-glucose: threonine 194, lysine 195, asparagine 229, and aspartate 230. The hexokinase large subdomain stretch occupies residues 229–480; that stretch reads NDTVGALSFG…QHVVVKAMED (252 aa). Threonine 253 provides a ligand contact to ADP. D-glucose-binding residues include asparagine 256, glutamate 284, and glutamate 315. Glycine 445 provides a ligand contact to ADP.

The protein belongs to the hexokinase family.

It localises to the mitochondrion outer membrane. It carries out the reaction a D-hexose + ATP = a D-hexose 6-phosphate + ADP + H(+). The catalysed reaction is D-fructose + ATP = D-fructose 6-phosphate + ADP + H(+). It catalyses the reaction D-glucose + ATP = D-glucose 6-phosphate + ADP + H(+). It participates in carbohydrate metabolism; hexose metabolism. It functions in the pathway carbohydrate degradation; glycolysis; D-glyceraldehyde 3-phosphate and glycerone phosphate from D-glucose: step 1/4. In terms of biological role, fructose and glucose phosphorylating enzyme. May be involved in the phosphorylation of glucose during the export from mitochondrion to cytosol. The sequence is that of Hexokinase-4 from Arabidopsis thaliana (Mouse-ear cress).